The sequence spans 419 residues: Carboxypeptidase A2 (419 aa).

Positions 1–18 are cleaved as a signal peptide; the sequence is MAMRLILFFGALFGHIYC. Residues 19 to 114 constitute a propeptide, activation peptide; it reads LETFVGDQVL…EMLFNRRRER (96 aa). A Peptidase M14 domain is found at 122 to 414; that stretch reads AYHTLEEISQ…LGLKAIMEHV (293 aa). Zn(2+) contacts are provided by H179 and E182. Residues 179 to 182, R237, and 254 to 255 each bind substrate; these read HARE and NR. The cysteines at positions 248 and 271 are disulfide-linked. H306 lines the Zn(2+) pocket. 307–308 is a binding site for substrate; it reads SY. C320 and C354 are oxidised to a cystine. Y358 is a substrate binding site. E380 functions as the Proton donor/acceptor in the catalytic mechanism.

This sequence belongs to the peptidase M14 family. Requires Zn(2+) as cofactor.

It localises to the secreted. The enzyme catalyses Similar to that of carboxypeptidase A (EC 3.4.17.1), but with a preference for bulkier C-terminal residues.. In terms of biological role, carboxypeptidase that catalyzes the release of a C-terminal amino acid, with a preference for large aromatic C-terminal residues. This is Carboxypeptidase A2 (CPA2) from Homo sapiens (Human).